An 819-amino-acid polypeptide reads, in one-letter code: Leucine--tRNA ligase (819 aa).

The 'HIGH' region motif lies at 40 to 51 (PYPSGAGLHVGH). The 'KMSKS' region signature appears at 600–604 (KMSKS). Lysine 603 provides a ligand contact to ATP.

This sequence belongs to the class-I aminoacyl-tRNA synthetase family.

The protein resides in the cytoplasm. It carries out the reaction tRNA(Leu) + L-leucine + ATP = L-leucyl-tRNA(Leu) + AMP + diphosphate. The protein is Leucine--tRNA ligase of Chlamydia trachomatis serovar L2 (strain ATCC VR-902B / DSM 19102 / 434/Bu).